The sequence spans 226 residues: Elongation factor 1-delta 2 (226 aa).

The interval 82-131 (TACSVSPTADQKAPAADEEDDDDVDLFGEETEEEKKAAEERAAAVKASGK) is disordered. The segment covering 97–113 (ADEEDDDDVDLFGEETE) has biased composition (acidic residues). Basic and acidic residues predominate over residues 114 to 124 (EEKKAAEERAA).

It belongs to the EF-1-beta/EF-1-delta family. In terms of assembly, EF-1 is composed of 4 subunits: alpha, beta (1B-alpha=beta'), delta (1B-beta), and gamma (1B-gamma).

Functionally, EF-1-beta and EF-1-beta' stimulate the exchange of GDP bound to EF-1-alpha to GTP. This Oryza sativa subsp. japonica (Rice) protein is Elongation factor 1-delta 2.